Consider the following 622-residue polypeptide: Low affinity potassium transport system protein Kup (622 aa).

A run of 12 helical transmembrane segments spans residues 9-29 (LPAI…TSPL), 49-69 (VFGF…IKYL), 103-123 (VIMG…TPAI), 137-157 (PQLD…LFMI), 165-185 (VGKL…GLGL), 213-233 (VSFI…ALYA), 247-267 (WFTV…ALLL), 276-296 (PFFL…AALA), 337-357 (IYIP…IVSF), 363-383 (LAAA…ILST), 396-416 (FVAL…TANL), and 419-439 (LLSG…VMTT).

It belongs to the HAK/KUP transporter (TC 2.A.72) family.

The protein localises to the cell inner membrane. The enzyme catalyses K(+)(in) + H(+)(in) = K(+)(out) + H(+)(out). Its function is as follows. Responsible for the low-affinity transport of potassium into the cell. Likely operates as a K(+):H(+) symporter. In Shigella sonnei (strain Ss046), this protein is Low affinity potassium transport system protein Kup.